Consider the following 109-residue polypeptide: Small ribosomal subunit protein uS10c (109 aa).

It belongs to the universal ribosomal protein uS10 family. In terms of assembly, part of the 30S ribosomal subunit.

It is found in the plastid. It localises to the chloroplast. Its function is as follows. Involved in the binding of tRNA to the ribosomes. The polypeptide is Small ribosomal subunit protein uS10c (Cyanidium caldarium (Red alga)).